Reading from the N-terminus, the 200-residue chain is Phospholipase D (200 aa).

The first 25 residues, 1 to 25 (MKRKNNKFIEISIAFILGVALGIYG), serve as a signal peptide directing secretion. Residues 142 to 169 (VPGIAHNKVIIIDRKKVITGSFNFTAAA) form the PLD phosphodiesterase domain. Active-site residues include H147, K149, and D154.

This sequence belongs to the phospholipase D family. Homodimer.

Its subcellular location is the secreted. The enzyme catalyses a 1,2-diacyl-sn-glycero-3-phosphocholine + H2O = a 1,2-diacyl-sn-glycero-3-phosphate + choline + H(+). Could be a virulence factor. The sequence is that of Phospholipase D (pld) from Rickettsia felis (strain ATCC VR-1525 / URRWXCal2) (Rickettsia azadi).